We begin with the raw amino-acid sequence, 25 residues long: Snake venom metalloproteinase catroxase (25 aa).

Glu9 serves as a coordination point for Ca(2+).

Belongs to the venom metalloproteinase (M12B) family. As to quaternary structure, monomer. Zn(2+) serves as cofactor. Expressed by the venom gland.

The protein resides in the secreted. Inhibited by EDTA, beta-mercaptoethanol, but not by PMSF, p-tosyl-L-phenylalanine chloromethyl ketone, p-tosyl-L-lysine chloromethyl ketone, soybean trypsin inhibitor and aprotinin. Functionally, metalloprotease that is highly active against alpha-(FGA) and beta-chains (FGB) of fibrinogen molecules. The sequence is that of Snake venom metalloproteinase catroxase from Crotalus atrox (Western diamondback rattlesnake).